Reading from the N-terminus, the 328-residue chain is MQRLVAWDAACLPIQPPAFKSMEVANFYYEADCLAALNKLHPRAAGGRSMTELTVGDHERAIDFSPYLDPLAASQQPAQPPPPAAAAGGNFEPACSSGGQDFLSDLFAEDYKGSGGGKKPDYTYISLTRHGHPCGSQSHKPGVLPGCFPPQIVETKVEPVFETLDSCKGPRKEEGGAGPGPGGMSSPYGSTVRSYLGYQSVPSGSSGNLSTSSSSSPPGTPNPSESSKSAAGAGGYSGPPAGKNKPKKCVDKHSDEYKLRRERNNIAVRKSRDKAKMRNLETQHKVLELTAENERLQKKVEQLSRELSTLRNLFKQLPEPLLASSPRC.

Arg3 carries the post-translational modification Asymmetric dimethylarginine; by CARM1. Lys39 is modified (N6-methylated lysine). A disordered region spans residues 165–274 (DSCKGPRKEE…NIAVRKSRDK (110 aa)). A compositionally biased stretch (low complexity) spans 200–231 (SVPSGSSGNLSTSSSSSPPGTPNPSESSKSAA). Phosphothreonine; by RPS6KA1, CDK2 and MAPK is present on Thr220. Residues 248–264 (KCVDKHSDEYKLRRERN) show a composition bias toward basic and acidic residues. One can recognise a bZIP domain in the interval 254 to 317 (SDEYKLRRER…STLRNLFKQL (64 aa)). A basic motif region spans residues 258–278 (KLRRERNNIAVRKSRDKAKMR). The segment at 280 to 287 (LETQHKVL) is leucine-zipper.

It belongs to the bZIP family. C/EBP subfamily. Binds DNA as a dimer. Interacts (not methylated) with MED23, MED26, SMARCA2, SMARCB1 and SMARCC1. Post-translationally, methylated. Methylation at Arg-3 by CARM1 and at Lys-39 by EHMT2, inhibit transactivation activity. Methylation is probably inhibited by phosphorylation at Thr-220. As to expression, specifically expressed in myelomoncytic cells.

It localises to the nucleus. Functionally, important transcriptional activator regulating the expression of genes involved in immune and inflammatory responses. Binds to regulatory regions of several acute-phase and cytokines genes and probably plays a role in the regulation of acute-phase reaction, inflammation and hemopoiesis. The consensus recognition site is 5'-T[TG]NNGNAA[TG]-3'. Functions in brown adipose tissue (BAT) differentiation. Regulates the transcriptional induction of peroxisome proliferator-activated receptor gamma (PPARG). Binds to the MGF and MIM-1 promoters and activates the transcription of these genes. Its function is as follows. Important transcription factor regulating the expression of genes involved in immune and inflammatory responses. Also plays a significant role in adipogenesis, as well as in the gluconeogenic pathway, liver regeneration, and hematopoiesis. The consensus recognition site is 5'-T[TG]NNGNAA[TG]-3'. Its functional capacity is governed by protein interactions and post-translational protein modifications. The protein is CCAAT/enhancer-binding protein beta (CEBPB) of Gallus gallus (Chicken).